Consider the following 204-residue polypeptide: U1 small nuclear ribonucleoprotein C (204 aa).

A Matrin-type zinc finger spans residues 4-36; the sequence is FFCDYCDVYLTHDSMSVRKAHNSGRNHLRNVVD. Residues 65-204 are disordered; it reads ANPMLPQNQP…GAGAPGHEKR (140 aa). 2 stretches are compositionally biased toward pro residues: residues 77-154 and 166-192; these read GFPP…PGAP and APPP…PGFA.

The protein belongs to the U1 small nuclear ribonucleoprotein C family. As to quaternary structure, U1 snRNP is composed of the 7 core Sm proteins B/B', D1, D2, D3, E, F and G that assemble in a heptameric protein ring on the Sm site of the small nuclear RNA to form the core snRNP, and at least 3 U1 snRNP-specific proteins U1-70K, U1-A and U1-C. U1-C interacts with U1 snRNA and the 5' splice-site region of the pre-mRNA.

Its subcellular location is the nucleus. Its function is as follows. Component of the spliceosomal U1 snRNP, which is essential for recognition of the pre-mRNA 5' splice-site and the subsequent assembly of the spliceosome. U1-C is directly involved in initial 5' splice-site recognition for both constitutive and regulated alternative splicing. The interaction with the 5' splice-site seems to precede base-pairing between the pre-mRNA and the U1 snRNA. Stimulates commitment or early (E) complex formation by stabilizing the base pairing of the 5' end of the U1 snRNA and the 5' splice-site region. This Fusarium vanettenii (strain ATCC MYA-4622 / CBS 123669 / FGSC 9596 / NRRL 45880 / 77-13-4) (Fusarium solani subsp. pisi) protein is U1 small nuclear ribonucleoprotein C.